We begin with the raw amino-acid sequence, 880 residues long: Phosphoinositide 3-kinase regulatory subunit 5 (880 aa).

Position 1 is an N-acetylmethionine (Met1). Positions Ser25–Leu101 are heterodimerization. Disordered stretches follow at residues Gly315–His339, Ser389–Arg416, Arg454–Glu510, and His565–Glu601. Acidic residues predominate over residues Gly318–Glu335. A phosphoserine mark is found at Ser458 and Ser507. Residues Ala571–Asp585 show a composition bias toward pro residues. The interaction with beta-gamma G protein dimers stretch occupies residues Pro653–Ser753.

As to quaternary structure, heterodimer of a catalytic subunit (PIK3CG/p120) and a regulatory (PIK3R5a/p101) subunit. Interacts with beta-gamma G protein dimers. Ubiquitously expressed with high expression in fetal brain compared to adult brain. Abundant expression is observed in cerebellum, cerebral cortex, cerebral meninges, and vermis cerebelli.

Its subcellular location is the nucleus. The protein localises to the cytoplasm. It is found in the cell membrane. With respect to regulation, greatly activated by G gamma proteins. Functionally, regulatory subunit of the PI3K gamma complex. Required for recruitment of the catalytic subunit to the plasma membrane via interaction with beta-gamma G protein dimers. Required for G protein-mediated activation of PIK3CG. The polypeptide is Phosphoinositide 3-kinase regulatory subunit 5 (PIK3R5) (Homo sapiens (Human)).